The chain runs to 476 residues: Arginine biosynthesis bifunctional protein ArgJ, mitochondrial (476 aa).

Residues threonine 193, lysine 219, threonine 237, glutamate 337, asparagine 471, and serine 476 each coordinate substrate. Catalysis depends on threonine 237, which acts as the Nucleophile.

It belongs to the ArgJ family. In terms of assembly, heterodimer of an alpha and a beta chain. In terms of processing, the alpha and beta chains are autoproteolytically processed from a single precursor protein within the mitochondrion.

Its subcellular location is the mitochondrion matrix. The enzyme catalyses N(2)-acetyl-L-ornithine + L-glutamate = N-acetyl-L-glutamate + L-ornithine. The catalysed reaction is L-glutamate + acetyl-CoA = N-acetyl-L-glutamate + CoA + H(+). The protein operates within amino-acid biosynthesis; L-arginine biosynthesis; L-ornithine and N-acetyl-L-glutamate from L-glutamate and N(2)-acetyl-L-ornithine (cyclic): step 1/1. Its pathway is amino-acid biosynthesis; L-arginine biosynthesis; N(2)-acetyl-L-ornithine from L-glutamate: step 1/4. In terms of biological role, catalyzes two activities which are involved in the cyclic version of arginine biosynthesis: the synthesis of acetylglutamate from glutamate and acetyl-CoA, and of ornithine by transacetylation between acetylornithine and glutamate. This chain is Arginine biosynthesis bifunctional protein ArgJ, mitochondrial, found in Cryptococcus neoformans var. neoformans serotype D (strain B-3501A) (Filobasidiella neoformans).